We begin with the raw amino-acid sequence, 418 residues long: Glutamyl-tRNA reductase (418 aa).

Substrate contacts are provided by residues T49–R52, S109, E114–Q116, and Q120. Catalysis depends on C50, which acts as the Nucleophile. G189 to I194 is an NADP(+) binding site.

Belongs to the glutamyl-tRNA reductase family. In terms of assembly, homodimer.

It catalyses the reaction (S)-4-amino-5-oxopentanoate + tRNA(Glu) + NADP(+) = L-glutamyl-tRNA(Glu) + NADPH + H(+). The protein operates within porphyrin-containing compound metabolism; protoporphyrin-IX biosynthesis; 5-aminolevulinate from L-glutamyl-tRNA(Glu): step 1/2. Its function is as follows. Catalyzes the NADPH-dependent reduction of glutamyl-tRNA(Glu) to glutamate 1-semialdehyde (GSA). The sequence is that of Glutamyl-tRNA reductase from Escherichia coli O9:H4 (strain HS).